Here is an 89-residue protein sequence, read N- to C-terminus: Small ribosomal subunit protein uS17 (89 aa).

This sequence belongs to the universal ribosomal protein uS17 family. As to quaternary structure, part of the 30S ribosomal subunit.

Functionally, one of the primary rRNA binding proteins, it binds specifically to the 5'-end of 16S ribosomal RNA. The chain is Small ribosomal subunit protein uS17 from Nocardia farcinica (strain IFM 10152).